A 376-amino-acid chain; its full sequence is 23S rRNA (uracil(747)-C(5))-methyltransferase RlmC (376 aa).

Residues Cys-3, Cys-11, Cys-14, and Cys-87 each contribute to the [4Fe-4S] cluster site. 4 residues coordinate S-adenosyl-L-methionine: Gln-212, Phe-241, Glu-262, and Asn-307. Cys-334 serves as the catalytic Nucleophile.

Belongs to the class I-like SAM-binding methyltransferase superfamily. RNA M5U methyltransferase family. RlmC subfamily.

It carries out the reaction uridine(747) in 23S rRNA + S-adenosyl-L-methionine = 5-methyluridine(747) in 23S rRNA + S-adenosyl-L-homocysteine + H(+). Functionally, catalyzes the formation of 5-methyl-uridine at position 747 (m5U747) in 23S rRNA. In Yersinia pestis bv. Antiqua (strain Antiqua), this protein is 23S rRNA (uracil(747)-C(5))-methyltransferase RlmC.